The primary structure comprises 142 residues: Organic hydroperoxide resistance protein-like 2 (142 aa).

The protein belongs to the OsmC/Ohr family.

This is Organic hydroperoxide resistance protein-like 2 from Staphylococcus epidermidis (strain ATCC 35984 / DSM 28319 / BCRC 17069 / CCUG 31568 / BM 3577 / RP62A).